The chain runs to 342 residues: tRNA dimethylallyltransferase (342 aa).

An ATP-binding site is contributed by 39–46 (GPTGSGKT). 41-46 (TGSGKT) lines the substrate pocket. The tract at residues 64-67 (DSMQ) is interaction with substrate tRNA.

This sequence belongs to the IPP transferase family. In terms of assembly, monomer. The cofactor is Mg(2+).

The catalysed reaction is adenosine(37) in tRNA + dimethylallyl diphosphate = N(6)-dimethylallyladenosine(37) in tRNA + diphosphate. Functionally, catalyzes the transfer of a dimethylallyl group onto the adenine at position 37 in tRNAs that read codons beginning with uridine, leading to the formation of N6-(dimethylallyl)adenosine (i(6)A). This Chlamydia abortus (strain DSM 27085 / S26/3) (Chlamydophila abortus) protein is tRNA dimethylallyltransferase.